The chain runs to 494 residues: Probable cytosol aminopeptidase (494 aa).

Mn(2+) contacts are provided by Lys-264 and Asp-269. The active site involves Lys-276. Mn(2+)-binding residues include Asp-287, Asp-346, and Glu-348. Arg-350 is an active-site residue.

The protein belongs to the peptidase M17 family. Mn(2+) is required as a cofactor.

Its subcellular location is the cytoplasm. It carries out the reaction Release of an N-terminal amino acid, Xaa-|-Yaa-, in which Xaa is preferably Leu, but may be other amino acids including Pro although not Arg or Lys, and Yaa may be Pro. Amino acid amides and methyl esters are also readily hydrolyzed, but rates on arylamides are exceedingly low.. It catalyses the reaction Release of an N-terminal amino acid, preferentially leucine, but not glutamic or aspartic acids.. Its function is as follows. Presumably involved in the processing and regular turnover of intracellular proteins. Catalyzes the removal of unsubstituted N-terminal amino acids from various peptides. The protein is Probable cytosol aminopeptidase (pepA) of Pasteurella multocida (strain Pm70).